The following is a 331-amino-acid chain: Ketol-acid reductoisomerase (NADP(+)) (331 aa).

The KARI N-terminal Rossmann domain occupies 2–182 (AKIYTDKDAS…GATRAGVIET (181 aa)). NADP(+)-binding positions include 25–28 (YGIQ), R48, S53, and 83–86 (DMEQ). The active site involves H108. G134 serves as a coordination point for NADP(+). In terms of domain architecture, KARI C-terminal knotted spans 183–328 (TFAEETETDL…AEMRKLLFGR (146 aa)). Mg(2+) contacts are provided by D191, E195, E227, and E231. S252 provides a ligand contact to substrate.

The protein belongs to the ketol-acid reductoisomerase family. Mg(2+) serves as cofactor.

The catalysed reaction is (2R)-2,3-dihydroxy-3-methylbutanoate + NADP(+) = (2S)-2-acetolactate + NADPH + H(+). The enzyme catalyses (2R,3R)-2,3-dihydroxy-3-methylpentanoate + NADP(+) = (S)-2-ethyl-2-hydroxy-3-oxobutanoate + NADPH + H(+). It functions in the pathway amino-acid biosynthesis; L-isoleucine biosynthesis; L-isoleucine from 2-oxobutanoate: step 2/4. It participates in amino-acid biosynthesis; L-valine biosynthesis; L-valine from pyruvate: step 2/4. Functionally, involved in the biosynthesis of branched-chain amino acids (BCAA). Catalyzes an alkyl-migration followed by a ketol-acid reduction of (S)-2-acetolactate (S2AL) to yield (R)-2,3-dihydroxy-isovalerate. In the isomerase reaction, S2AL is rearranged via a Mg-dependent methyl migration to produce 3-hydroxy-3-methyl-2-ketobutyrate (HMKB). In the reductase reaction, this 2-ketoacid undergoes a metal-dependent reduction by NADPH to yield (R)-2,3-dihydroxy-isovalerate. This is Ketol-acid reductoisomerase (NADP(+)) from Pyrobaculum islandicum (strain DSM 4184 / JCM 9189 / GEO3).